Reading from the N-terminus, the 286-residue chain is MVPMNDFWVKAILSSTNPSPVPSTTSTVSNDENLDKTLDFDCSTQTVFPTLPMFWNPTLVQQMLALYQIQQQQIQFSAKLAPQPLFQEPTIQKEFLPFPHQSRKRPLPIDPKKTKLRKLNEDTVTSSPVSGMFIKEEADVKSVEELQKEADLLDETAAYVEVTEESRQKIDEIPNVIGDCICRLCKVKYEDVFKLAQHKCPRIAHEEYKCPDCDKVFSCPANLASHRRWHKPRNELGGSPPAQSSTIVSCSTCFNSFPTKKMLKLHSSTCQRSPLQDLLSRVIPTM.

The segment at 180-200 (CICRLCKVKYEDVFKLAQHKC) adopts a C2H2-type 1; atypical zinc-finger fold. 2 C2H2-type zinc fingers span residues 208 to 230 (YKCPDCDKVFSCPANLASHRRWH) and 248 to 271 (VSCSTCFNSFPTKKMLKLHSSTCQ).

This sequence belongs to the INSM1 family. Interacts (via C-terminus) with egl-44 (via N-terminus); the interaction is direct; the interaction may regulate transcription. As to expression, expressed in touch cells, HSN cells, ventral cord motor neurons and ciliated ray neurons.

It localises to the nucleus. In terms of biological role, transcription factor. Represses expression of genes involved in differentiation of touch receptor neurons (TRN), probably acting as a heterodimer with egl-44, perhaps by occupying similar cis-regulatory elements as an unc-86/mec-3 heterodimer. Plays a role in cell fate specification of neurons, including the hook neuron HOB, the gas-sensing neuron BAG and touch receptor neurons. Plays a role in neuron differentiation by repressing the expression of zag-1 in FLP neurons, probably acting as a heterodimer with egl-44; because zag-1 represses expression of egl-46 and egl-44, together these proteins form a bistable, negative-feedback loop that regulates the choice between neuronal fates. Acts downstream of egl-44 to prevent touch cell differentiation in FLP neurons. Involved in male mating behavior, acting in concert with egl-44, via modulation of expression of polycystins lov-1 and pkd-2, homeodomain protein ceh-26, and neuropeptide-like protein nlp-8. Modulates the expression of a subset of terminal differentiation genes involved in O(2)- and CO(2)-sensing, acting in parallel to ets-5 and egl-13. May act upstream of RFX transcription factor daf-19 to regulate gene expression specifically in the HOB neuron. Plays a role in specifying commissural dendrites of the PVD nociceptive neurons, acting in concert with egl-44. In association with egl-44, regulates cell cycle exit in the neuronal Q cell lineage. This chain is Transcription factor egl-46, found in Caenorhabditis elegans.